The following is a 706-amino-acid chain: Elongation factor G (706 aa).

One can recognise a tr-type G domain in the interval 8–290 (KRYRNIGIVA…GVIEYMPSPT (283 aa)). GTP-binding positions include 17–24 (AHVDAGKT), 88–92 (DTPGH), and 142–145 (NKMD).

It belongs to the TRAFAC class translation factor GTPase superfamily. Classic translation factor GTPase family. EF-G/EF-2 subfamily.

Its subcellular location is the cytoplasm. In terms of biological role, catalyzes the GTP-dependent ribosomal translocation step during translation elongation. During this step, the ribosome changes from the pre-translocational (PRE) to the post-translocational (POST) state as the newly formed A-site-bound peptidyl-tRNA and P-site-bound deacylated tRNA move to the P and E sites, respectively. Catalyzes the coordinated movement of the two tRNA molecules, the mRNA and conformational changes in the ribosome. The chain is Elongation factor G from Chromohalobacter salexigens (strain ATCC BAA-138 / DSM 3043 / CIP 106854 / NCIMB 13768 / 1H11).